A 173-amino-acid chain; its full sequence is Alpha-crystallin A chain (173 aa).

N-acetylmethionine is present on Met1. Residues Met1–Glu63 form a required for complex formation with BFSP1 and BFSP2 region. At Gln6 the chain carries Deamidated glutamine; partial. Phosphoserine is present on Ser45. At Gln50 the chain carries Deamidated glutamine; partial. The 111-residue stretch at Val52–Ser162 folds into the sHSP domain. 2 positions are modified to N6-acetyllysine: Lys70 and Lys99. Residue His100 participates in Zn(2+) binding. A Deamidated asparagine; partial modification is found at Asn101. Zn(2+) is bound by residues Glu102 and His107. Ser122 carries the post-translational modification Phosphoserine. Asn123 bears the Deamidated asparagine; partial mark. The tract at residues Pro144–Ser173 is disordered. Residues Gly153–Pro167 are compositionally biased toward basic and acidic residues. Residue His154 coordinates Zn(2+). Ser162 is a glycosylation site (O-linked (GlcNAc) serine).

This sequence belongs to the small heat shock protein (HSP20) family. In terms of assembly, heteromer composed of three CRYAA and one CRYAB subunits. Inter-subunit bridging via zinc ions enhances stability, which is crucial as there is no protein turn over in the lens. Can also form homodimers and homotetramers (dimers of dimers) which serve as the building blocks of homooligomers. Within homooligomers, the zinc-binding motif is created from residues of 3 different molecules. His-100 and Glu-102 from one molecule are ligands of the zinc ion, and His-107 and His-154 residues from additional molecules complete the site with tetrahedral coordination geometry. Part of a complex required for lens intermediate filament formation composed of BFSP1, BFSP2 and CRYAA. Post-translationally, acetylation at Lys-70 may increase chaperone activity. Undergoes age-dependent proteolytical cleavage at the C-terminus.

It localises to the cytoplasm. The protein resides in the nucleus. Its function is as follows. Contributes to the transparency and refractive index of the lens. Acts as a chaperone, preventing aggregation of various proteins under a wide range of stress conditions. Required for the correct formation of lens intermediate filaments as part of a complex composed of BFSP1, BFSP2 and CRYAA. In Halichoerus grypus (Gray seal), this protein is Alpha-crystallin A chain (CRYAA).